A 165-amino-acid chain; its full sequence is UPF0114 protein ESA_00283 (165 aa).

3 consecutive transmembrane segments (helical) span residues 15 to 35, 53 to 73, and 136 to 156; these read LLAPVYFGLSLALLALTVKFF, LILLLLSLVDMTLVGGLLVMV, and LMWYVIIHLTFVLSAFVMGYL.

Belongs to the UPF0114 family.

It is found in the cell membrane. The chain is UPF0114 protein ESA_00283 from Cronobacter sakazakii (strain ATCC BAA-894) (Enterobacter sakazakii).